We begin with the raw amino-acid sequence, 206 residues long: Large ribosomal subunit protein uL4 (206 aa).

Positions 44 to 80 are disordered; that stretch reads KRAGTHSVKTRSTISGGGAKPWRQKGTGRARSGSNRS.

The protein belongs to the universal ribosomal protein uL4 family. In terms of assembly, part of the 50S ribosomal subunit.

Functionally, one of the primary rRNA binding proteins, this protein initially binds near the 5'-end of the 23S rRNA. It is important during the early stages of 50S assembly. It makes multiple contacts with different domains of the 23S rRNA in the assembled 50S subunit and ribosome. Forms part of the polypeptide exit tunnel. The sequence is that of Large ribosomal subunit protein uL4 from Oleidesulfovibrio alaskensis (strain ATCC BAA-1058 / DSM 17464 / G20) (Desulfovibrio alaskensis).